The primary structure comprises 660 residues: tRNA 5-methylaminomethyl-2-thiouridine biosynthesis bifunctional protein MnmC (660 aa).

The tract at residues 1 to 233 is tRNA (mnm(5)s(2)U34)-methyltransferase; it reads MTHSHAQLVW…KRHISHGWIA (233 aa). Residues 260 to 660 form an FAD-dependent cmnm(5)s(2)U34 oxidoreductase region; the sequence is VGGGLAGAAS…IRRKLDPDAL (401 aa).

It in the N-terminal section; belongs to the methyltransferase superfamily. tRNA (mnm(5)s(2)U34)-methyltransferase family. The protein in the C-terminal section; belongs to the DAO family. FAD serves as cofactor.

The protein resides in the cytoplasm. It carries out the reaction 5-aminomethyl-2-thiouridine(34) in tRNA + S-adenosyl-L-methionine = 5-methylaminomethyl-2-thiouridine(34) in tRNA + S-adenosyl-L-homocysteine + H(+). Catalyzes the last two steps in the biosynthesis of 5-methylaminomethyl-2-thiouridine (mnm(5)s(2)U) at the wobble position (U34) in tRNA. Catalyzes the FAD-dependent demodification of cmnm(5)s(2)U34 to nm(5)s(2)U34, followed by the transfer of a methyl group from S-adenosyl-L-methionine to nm(5)s(2)U34, to form mnm(5)s(2)U34. In Chromobacterium violaceum (strain ATCC 12472 / DSM 30191 / JCM 1249 / CCUG 213 / NBRC 12614 / NCIMB 9131 / NCTC 9757 / MK), this protein is tRNA 5-methylaminomethyl-2-thiouridine biosynthesis bifunctional protein MnmC.